We begin with the raw amino-acid sequence, 136 residues long: uncharacterized protein (136 aa).

This is an uncharacterized protein from Caenorhabditis elegans.